A 570-amino-acid chain; its full sequence is Urease subunit alpha (570 aa).

A Urease domain is found at 131–570; sequence GGMDSHIHFI…LPMAQRYFLF (440 aa). Ni(2+) contacts are provided by His-136, His-138, and Lys-219. Residue Lys-219 is modified to N6-carboxylysine. His-221 is a substrate binding site. Ni(2+)-binding residues include His-248 and His-274. The active-site Proton donor is the His-322. Asp-362 contacts Ni(2+).

It belongs to the metallo-dependent hydrolases superfamily. Urease alpha subunit family. In terms of assembly, heterotrimer of UreA (gamma), UreB (beta) and UreC (alpha) subunits. Three heterotrimers associate to form the active enzyme. Ni cation is required as a cofactor. Post-translationally, carboxylation allows a single lysine to coordinate two nickel ions.

It localises to the cytoplasm. It carries out the reaction urea + 2 H2O + H(+) = hydrogencarbonate + 2 NH4(+). Its pathway is nitrogen metabolism; urea degradation; CO(2) and NH(3) from urea (urease route): step 1/1. This Rhizobium meliloti (strain 1021) (Ensifer meliloti) protein is Urease subunit alpha.